The chain runs to 412 residues: Multifunctional CCA protein (412 aa).

Residues Gly8 and Arg11 each contribute to the ATP site. Gly8 and Arg11 together coordinate CTP. Mg(2+) contacts are provided by Glu21 and Asp23. Residues Arg91, Arg137, and Arg140 each contribute to the ATP site. The CTP site is built by Arg91, Arg137, and Arg140. The region spanning 228-329 (TGIHTLMTLA…LKLFNAIDVW (102 aa)) is the HD domain.

The protein belongs to the tRNA nucleotidyltransferase/poly(A) polymerase family. Bacterial CCA-adding enzyme type 1 subfamily. As to quaternary structure, monomer. Can also form homodimers and oligomers. The cofactor is Mg(2+). Requires Ni(2+) as cofactor.

It carries out the reaction a tRNA precursor + 2 CTP + ATP = a tRNA with a 3' CCA end + 3 diphosphate. The catalysed reaction is a tRNA with a 3' CCA end + 2 CTP + ATP = a tRNA with a 3' CCACCA end + 3 diphosphate. In terms of biological role, catalyzes the addition and repair of the essential 3'-terminal CCA sequence in tRNAs without using a nucleic acid template. Adds these three nucleotides in the order of C, C, and A to the tRNA nucleotide-73, using CTP and ATP as substrates and producing inorganic pyrophosphate. tRNA 3'-terminal CCA addition is required both for tRNA processing and repair. Also involved in tRNA surveillance by mediating tandem CCA addition to generate a CCACCA at the 3' terminus of unstable tRNAs. While stable tRNAs receive only 3'-terminal CCA, unstable tRNAs are marked with CCACCA and rapidly degraded. In Yersinia pseudotuberculosis serotype I (strain IP32953), this protein is Multifunctional CCA protein.